Consider the following 285-residue polypeptide: Probable E3 ubiquitin-protein ligase IE1 (285 aa).

The Cytoplasmic segment spans residues 1–201 (MASKDSDVRC…LPGYWDRDDR (201 aa)). An RING-CH-type zinc finger spans residues 124–183 (SIDEEGKQCWICRDGESLPEARYCNCYGDLQYCHEECLKTWISMSGEKKCKFCQTPYKVN). Zn(2+) is bound by residues Cys-132, Cys-135, Cys-147, Cys-149, His-157, Cys-160, Cys-173, and Cys-176. A helical membrane pass occupies residues 202-222 (FVFIAGFIGMGTILAGWIASF). Topologically, residues 223 to 238 (FYLLVVLCGKYFTYKD) are extracellular. A helical transmembrane segment spans residues 239–259 (VMIVVGGLAIIQVVGLMFSLF). Over 260–285 (MYFQIGNLLRQYINYMTETNIDPLRT) the chain is Cytoplasmic.

The protein resides in the membrane. It catalyses the reaction S-ubiquitinyl-[E2 ubiquitin-conjugating enzyme]-L-cysteine + [acceptor protein]-L-lysine = [E2 ubiquitin-conjugating enzyme]-L-cysteine + N(6)-ubiquitinyl-[acceptor protein]-L-lysine.. It participates in protein modification; protein ubiquitination. Its function is as follows. Controls the expression of later classes of genes and also of the IE genes (Potential). E3 ubiquitin-protein ligase. E3 ubiquitin ligases accept ubiquitin from an E2 ubiquitin-conjugating enzyme in the form of a thioester and then directly transfer the ubiquitin to targeted substrates. The chain is Probable E3 ubiquitin-protein ligase IE1 (IE1) from Bovine herpesvirus 4 (strain DN-599) (BoHV-4).